The following is a 432-amino-acid chain: Adenylosuccinate synthetase (432 aa).

GTP is bound by residues 13-19 (GDEGKGK) and 41-43 (GHT). The active-site Proton acceptor is aspartate 14. Residues aspartate 14 and glycine 41 each contribute to the Mg(2+) site. IMP is bound by residues 14-17 (DEGK), 39-42 (NAGH), threonine 130, arginine 144, glutamine 225, threonine 240, and arginine 304. Catalysis depends on histidine 42, which acts as the Proton donor. 300 to 306 (ATTGRRR) contacts substrate. Residues arginine 306, 332 to 334 (KLD), and 415 to 417 (STG) each bind GTP.

Belongs to the adenylosuccinate synthetase family. In terms of assembly, homodimer. It depends on Mg(2+) as a cofactor.

Its subcellular location is the cytoplasm. The catalysed reaction is IMP + L-aspartate + GTP = N(6)-(1,2-dicarboxyethyl)-AMP + GDP + phosphate + 2 H(+). It functions in the pathway purine metabolism; AMP biosynthesis via de novo pathway; AMP from IMP: step 1/2. Functionally, plays an important role in the de novo pathway of purine nucleotide biosynthesis. Catalyzes the first committed step in the biosynthesis of AMP from IMP. This chain is Adenylosuccinate synthetase, found in Salmonella choleraesuis (strain SC-B67).